Here is a 366-residue protein sequence, read N- to C-terminus: PPPPPPQQFPQFHVRSGLQIKKNAIIDDYKVTSQVLGLGINGKVLQIFSKKTQEKFALKMLQDCPKARREVELHWRASQCPHIVRIVDVYENLYAGRKCLLIVMECLDGGELFSRIQDRGDQAFTEREASEIMKSIGEAIQYLHSINIAHRDVKPENLLYTSKRPKAILKLTDFGFAKETTSHNSLTTPCYTPYYVAPEVLGPEKYDKSCDMWSLGVIMYILLCGYPPFYSNHGLAISPGMKTRIRMGQYEFPNPEWSEVSEEVKMLIRNLLKTEPTQRMTITEFMNHPWIMQSTKVPQTPLHTSRVLKEDKERWEDVKEEMTSALATMRVDYEQIKIKKIEDASNPLLLKRRKKARALEAAALAH.

Positions 30-291 (KVTSQVLGLG…ITEFMNHPWI (262 aa)) constitute a Protein kinase domain. Residues 36–44 (LGLGINGKV) and Lys-59 each bind ATP. A staurosporine-binding site is contributed by 105-107 (ECL). Asp-152 functions as the Proton acceptor in the catalytic mechanism. Thr-188 carries the post-translational modification Phosphothreonine; by MAPK14. Ser-238 is subject to Phosphoserine; by MAPK14. Ser-294 is subject to Phosphoserine; by autocatalysis. Residues 294–330 (STKVPQTPLHTSRVLKEDKERWEDVKEEMTSALATMR) are autoinhibitory helix. At Thr-300 the chain carries Phosphothreonine; by MAPK14. Lys-319 participates in a covalent cross-link: Glycyl lysine isopeptide (Lys-Gly) (interchain with G-Cter in SUMO). The Nuclear export signal (NES) motif lies at 322–331 (MTSALATMRV). A p38 MAPK-binding site region spans residues 332 to 356 (DYEQIKIKKIEDASNPLLLKRRKKA). Short sequence motifs (bipartite nuclear localization signal) lie at residues 337–340 (KIKK) and 351–355 (KRRKK).

The protein belongs to the protein kinase superfamily. CAMK Ser/Thr protein kinase family. As to quaternary structure, heterodimer with p38-alpha/MAPK14; this heterodimer forms a stable complex: molecules are positioned 'face to face' so that the ATP-binding sites of both kinases are at the heterodimer interface. Interacts with PHC2. Interacts with HSF1. Sumoylation inhibits the protein kinase activity. Post-translationally, phosphorylated and activated by MAP kinase p38-alpha/MAPK14 at Thr-188, Ser-238 and Thr-300.

It is found in the cytoplasm. The protein localises to the nucleus. It carries out the reaction L-seryl-[protein] + ATP = O-phospho-L-seryl-[protein] + ADP + H(+). The enzyme catalyses L-threonyl-[protein] + ATP = O-phospho-L-threonyl-[protein] + ADP + H(+). With respect to regulation, activated following phosphorylation by p38-alpha/MAPK14 following various stresses. Inhibited following sumoylation. Specifically inhibited by pyrrolopyridine inhibitors. Its function is as follows. Stress-activated serine/threonine-protein kinase involved in cytokine production, endocytosis, reorganization of the cytoskeleton, cell migration, cell cycle control, chromatin remodeling, DNA damage response and transcriptional regulation. Following stress, it is phosphorylated and activated by MAP kinase p38-alpha/MAPK14, leading to phosphorylation of substrates. Phosphorylates serine in the peptide sequence, Hyd-X-R-X(2)-S, where Hyd is a large hydrophobic residue. Phosphorylates ALOX5, CDC25B, CDC25C, CEP131, ELAVL1, HNRNPA0, HSP27/HSPB1, KRT18, KRT20, LIMK1, LSP1, PABPC1, PARN, PDE4A, RCSD1, RPS6KA3, TAB3 and TTP/ZFP36. Phosphorylates HSF1; leading to the interaction with HSP90 proteins and inhibiting HSF1 homotrimerization, DNA-binding and transactivation activities. Mediates phosphorylation of HSP27/HSPB1 in response to stress, leading to dissociation of HSP27/HSPB1 from large small heat-shock protein (sHsps) oligomers and impairment of their chaperone activities and ability to protect against oxidative stress effectively. Involved in inflammatory response by regulating tumor necrosis factor (TNF) and IL6 production post-transcriptionally: acts by phosphorylating AU-rich elements (AREs)-binding proteins ELAVL1, HNRNPA0, PABPC1 and TTP/ZFP36, leading to regulate the stability and translation of TNF and IL6 mRNAs. Phosphorylation of TTP/ZFP36, a major post-transcriptional regulator of TNF, promotes its binding to 14-3-3 proteins and reduces its ARE mRNA affinity leading to inhibition of dependent degradation of ARE-containing transcripts. Phosphorylates CEP131 in response to cellular stress following ultraviolet irradiation which promotes binding of CEP131 to 14-3-3 proteins and inhibits formation of novel centriolar satellites. Also involved in late G2/M checkpoint following DNA damage through a process of post-transcriptional mRNA stabilization: following DNA damage, relocalizes from nucleus to cytoplasm and phosphorylates HNRNPA0 and PARN, leading to stabilization of GADD45A mRNA. Involved in toll-like receptor signaling pathway (TLR) in dendritic cells: required for acute TLR-induced macropinocytosis by phosphorylating and activating RPS6KA3. The sequence is that of MAP kinase-activated protein kinase 2 (MAPKAPK2) from Oryctolagus cuniculus (Rabbit).